We begin with the raw amino-acid sequence, 249 residues long: Eukaryotic translation initiation factor 3 subunit K (249 aa).

The PCI domain maps to 46–222; that stretch reads FDCYANLALL…VKVPSNKENE (177 aa).

This sequence belongs to the eIF-3 subunit K family. In terms of assembly, component of the eukaryotic translation initiation factor 3 (eIF-3) complex.

The protein localises to the cytoplasm. In terms of biological role, component of the eukaryotic translation initiation factor 3 (eIF-3) complex, which is involved in protein synthesis of a specialized repertoire of mRNAs and, together with other initiation factors, stimulates binding of mRNA and methionyl-tRNAi to the 40S ribosome. The eIF-3 complex specifically targets and initiates translation of a subset of mRNAs involved in cell proliferation. This chain is Eukaryotic translation initiation factor 3 subunit K, found in Aspergillus clavatus (strain ATCC 1007 / CBS 513.65 / DSM 816 / NCTC 3887 / NRRL 1 / QM 1276 / 107).